The primary structure comprises 194 residues: Endoribonuclease YbeY (194 aa).

Zn(2+) contacts are provided by H127, H131, and D137. A disordered region spans residues 162-194; that stretch reads PLSNDEDSAPEQDDSFDDDASDSSGGIMSGGVS. Positions 165-182 are enriched in acidic residues; it reads NDEDSAPEQDDSFDDDAS.

This sequence belongs to the endoribonuclease YbeY family. Zn(2+) serves as cofactor.

The protein localises to the cytoplasm. In terms of biological role, single strand-specific metallo-endoribonuclease involved in late-stage 70S ribosome quality control and in maturation of the 3' terminus of the 16S rRNA. In Rhodopirellula baltica (strain DSM 10527 / NCIMB 13988 / SH1), this protein is Endoribonuclease YbeY.